The chain runs to 325 residues: MSRVVKPKVASMEEMAAFHTDAYLQHLHKVSEEGDNDDPETLEYGLGYDCPITEGIYDYAAAVGGATLTAAEQLIEGKTRIAVNWPGGWHHAKKDEASGFCYLNDAVLGILKLREKFDRVLYVDMDLHHGDGVEDAFSFTSKVMTVSLHKFSPGFFPGTGDVSDIGLGKGRYYSINVPLQDGIQDDKYYQICEGVLKEVFTTFNPEAVVLQLGADTIAGDPMCSFNMTPEGIGKCLKYVLQWQLPTLILGGGGYHLPNTARCWTYLTALIVGRTLSSEIPDHEFFTEYGPDYVLEITPSCRPDRNDTQKVQEILQSIKGNLKRVV.

The segment at 1-272 is histone deacetylase; sequence MSRVVKPKVA…WTYLTALIVG (272 aa). A substrate-binding site is contributed by aspartate 49. Histidine 91 functions as the Proton acceptor in the catalytic mechanism. Glycine 99 contributes to the substrate binding site. A divalent metal cation contacts are provided by aspartate 126, histidine 128, and aspartate 215. Tyrosine 254 contacts substrate.

Belongs to the histone deacetylase family. HD type 1 subfamily. A divalent metal cation is required as a cofactor.

It localises to the nucleus. It is found in the chromosome. The protein localises to the cytoplasm. It carries out the reaction N(6)-acetyl-L-lysyl-[histone] + H2O = L-lysyl-[histone] + acetate. The enzyme catalyses N(6)-acetyl-L-lysyl-[protein] + H2O = L-lysyl-[protein] + acetate. It catalyses the reaction N(6)-(2E)-butenoyl-L-lysyl-[protein] + H2O = (2E)-2-butenoate + L-lysyl-[protein]. Its activity is inhibited by trichostatin A (TSA) and butyrate, 2 well known histone deacetylase inhibitors. Functionally, histone deacetylase that catalyzes the deacetylation of lysine residues on the N-terminal part of the core histones (H2A, H2B, H3 and H4). Histone deacetylation gives a tag for epigenetic repression and plays an important role in transcriptional regulation, cell cycle progression and developmental events. Histone deacetylases act via the formation of large multiprotein complexes. Also involved in the deacetylation of non-histone proteins. In addition to protein deacetylase activity, also has protein-lysine deacylase activity: acts as a protein decrotonylase by mediating decrotonylation ((2E)-butenoyl) of histones. This chain is Histone deacetylase 8 (hdac8), found in Xenopus laevis (African clawed frog).